The primary structure comprises 141 residues: Vesicle-associated membrane protein 4 (141 aa).

The tract at residues 1–51 (MPPKFKRHLNDDDVTGSVKSERRNLLEDDSDEEEDFFLRGPSGPRFGPRND) is disordered. Residues 1 to 115 (MPPKFKRHLN…RRQMWWRGCK (115 aa)) lie on the Cytoplasmic side of the membrane. S17 and S30 each carry phosphoserine. Residues 52-112 (KIKHVQNQVD…KQLRRQMWWR (61 aa)) enclose the v-SNARE coiled-coil homology domain. The helical; Anchor for type IV membrane protein transmembrane segment at 116 to 136 (IKAIMALVAAILLLVIIILIV) threads the bilayer. Over 137–141 (MKYRT) the chain is Vesicular.

Belongs to the synaptobrevin family. As to quaternary structure, identified in a complex containing STX6, STX12, VAMP4 and VTI1A. Interacts with BAIAP3; this interaction is increased in the presence of calcium.

It localises to the golgi apparatus. Its subcellular location is the trans-Golgi network membrane. In terms of biological role, involved in the pathway that functions to remove an inhibitor (probably synaptotagmin-4) of calcium-triggered exocytosis during the maturation of secretory granules. May be a marker for this sorting pathway that is critical for remodeling the secretory response of granule. The chain is Vesicle-associated membrane protein 4 (VAMP4) from Homo sapiens (Human).